The primary structure comprises 317 residues: Brain-specific serine protease 4 (317 aa).

Positions 1–32 are cleaved as a signal peptide; sequence MVVSGAPPALGGGCLGTFTSLLLLASTAILNA. Residues 50–290 enclose the Peptidase S1 domain; sequence VVGGEDSTDS…HRSWVEKIVQ (241 aa). Asn-70 carries an N-linked (GlcNAc...) asparagine glycan. Residues Cys-75 and Cys-91 are joined by a disulfide bond. Active-site charge relay system residues include His-90 and Asp-141. Intrachain disulfides connect Cys-175–Cys-248, Cys-208–Cys-227, and Cys-238–Cys-266. The Charge relay system role is filled by Ser-242.

The protein belongs to the peptidase S1 family. As to expression, expressed abundantly in the epithelial cells of the airways, including trachea, esophagus and fetal lung. Scarce in adult lung. Expressed at low levels in placenta, pancreas, prostate and thyroid gland.

The protein resides in the secreted. Preferentially cleaves the synthetic substrate H-D-Leu-Thr-Arg-pNA compared to tosyl-Gly-Pro-Arg-pNA. The sequence is that of Brain-specific serine protease 4 (PRSS22) from Homo sapiens (Human).